The primary structure comprises 201 residues: E3 ubiquitin-protein ligase MIR1 (201 aa).

Residues 1–58 (MDSTGEFCWICHQPEGPLKRFCGCKGSCAVSHQDCLRGWLETSRRQTCALCGTPYSMK) form an RING-CH-type zinc finger. Residues 1-81 (MDSTGEFCWI…EEVLAAMEAC (81 aa)) are Cytoplasmic-facing. Zn(2+) contacts are provided by Cys-8, Cys-11, Cys-22, Cys-24, His-32, Cys-35, Cys-48, and Cys-51. Residues 52–79 (GTPYSMKWKTKPLREWTWGEEEVLAAME) form a DIRT region. A helical membrane pass occupies residues 82 to 102 (LPLVLIPLAVLMIVMGTWLLV). Over 103 to 113 (NHNGFLSPRMQ) the chain is Extracellular. Residues 114–134 (VVLVVIVLLAMIVFSASASYV) traverse the membrane as a helical segment. The Cytoplasmic segment spans residues 135–201 (MVEGPGCLDT…RLGCVRLCCV (67 aa)).

As to quaternary structure, interacts with host UBE2J2.

The protein resides in the host endoplasmic reticulum membrane. It carries out the reaction [E2 ubiquitin-conjugating enzyme]-S-ubiquitinyl-L-cysteine + [acceptor protein]-L-cysteine = [E2 ubiquitin-conjugating enzyme]-L-cysteine + [acceptor protein]-S-ubiquitinyl-L-cysteine.. It participates in protein modification; protein ubiquitination. In terms of biological role, E3 ubiquitin-protein ligase that mediates ubiquitination of host surface class I (MHC-I) H-2D(b)/H2-D1 and H-2K(b)/H2-K1 molecules before they exit the endoplasmic reticulum, leading to their degradation by the endoplasmic reticulum-associated degradation (ERAD) system, thus blocking the immune detection of virus-infected cells. Mediates ubiquitination of lysine, as well as serine and threonine residues present in the cytoplasmic tail of surface class I molecules. Promotes ubiquitination of hydroxylated serine or threonine residues via ester bonds instead of the classical isopeptide linkage. In Murid herpesvirus 4 (MuHV-4), this protein is E3 ubiquitin-protein ligase MIR1 (K3).